The following is a 355-amino-acid chain: Enhancer of mRNA-decapping protein 1 (355 aa).

3 disordered regions span residues 1 to 146 (MSSD…VDGM), 210 to 230 (MSQPMSQPMSQPMSQPMSQPM), and 301 to 330 (NSTAKASVRSKGSPGSEGGSRRSQNWKSSQ). Positions 39–49 (AQKQQLPNGEQ) are enriched in polar residues. Positions 57–67 (KQSRKRGSGRQ) are enriched in basic residues. Residues 91–110 (SIPSGSAGSESAQKETSAGQ) are compositionally biased toward polar residues. The span at 123 to 142 (VPAGGPAGKSSSEPASASSA) shows a compositional bias: low complexity.

The protein belongs to the EDC family.

Its subcellular location is the cytoplasm. Functionally, mRNA-binding protein which stimulates mRNA decapping. In Eremothecium gossypii (strain ATCC 10895 / CBS 109.51 / FGSC 9923 / NRRL Y-1056) (Yeast), this protein is Enhancer of mRNA-decapping protein 1 (EDC1).